We begin with the raw amino-acid sequence, 193 residues long: Interleukin-18 (193 aa).

The propeptide occupies 1–36; the sequence is MAAEQVEDYCISFVEMKFINNTLYFVAENDEDLESD.

Belongs to the IL-1 family. In terms of assembly, forms a ternary complex with ligand-binding receptor subunit IL18R1 and signaling receptor subunit IL18RAP at the plasma membrane. Mature IL18 first binds to IL18R1 forming a low affinity binary complex, which then interacts with IL18RAP to form a high affinity ternary complex that signals inside the cell. Interacts with cargo receptor TMED10; the interaction mediates the translocation from the cytoplasm into the ERGIC (endoplasmic reticulum-Golgi intermediate compartment) and thereby secretion. In terms of processing, the pro-IL-18 precursor is processed by CASP1, CASP4 or CASP5 to yield its mature, active form. The pro-IL-18 precursor features autoinhibitory interactions between the propeptide and the post-cleavage-site region, preventing recognition by the IL18R1 receptor. Processing by CASP1, CASP4 or CASP5 induces conformational changes to generate critical receptor-binding sites. The mature form is then secreted and released in the extracellular milieu by passing through the gasdermin-D (GSDMD) pore. In contrast, cleavage by CASP3 inactivates IL18.

The protein resides in the cytoplasm. The protein localises to the cytosol. It is found in the secreted. Pro-inflammatory cytokine primarily involved in epithelial barrier repair, polarized T-helper 1 (Th1) cell and natural killer (NK) cell immune responses. Upon binding to IL18R1 and IL18RAP, forms a signaling ternary complex which activates NF-kappa-B, triggering synthesis of inflammatory mediators. Synergizes with IL12/interleukin-12 to induce IFNG synthesis from T-helper 1 (Th1) cells and natural killer (NK) cells. Involved in transduction of inflammation downstream of pyroptosis: its mature form is specifically released in the extracellular milieu by passing through the gasdermin-D (GSDMD) pore. This chain is Interleukin-18 (IL18), found in Bos taurus (Bovine).